Reading from the N-terminus, the 427-residue chain is Serine--tRNA ligase (427 aa).

231–233 (TAE) provides a ligand contact to L-serine. 262–264 (RSE) is an ATP binding site. Residue E285 coordinates L-serine. 349-352 (EISS) provides a ligand contact to ATP. S385 is an L-serine binding site.

The protein belongs to the class-II aminoacyl-tRNA synthetase family. Type-1 seryl-tRNA synthetase subfamily. As to quaternary structure, homodimer. The tRNA molecule binds across the dimer.

The protein localises to the cytoplasm. It carries out the reaction tRNA(Ser) + L-serine + ATP = L-seryl-tRNA(Ser) + AMP + diphosphate + H(+). The catalysed reaction is tRNA(Sec) + L-serine + ATP = L-seryl-tRNA(Sec) + AMP + diphosphate + H(+). It participates in aminoacyl-tRNA biosynthesis; selenocysteinyl-tRNA(Sec) biosynthesis; L-seryl-tRNA(Sec) from L-serine and tRNA(Sec): step 1/1. Catalyzes the attachment of serine to tRNA(Ser). Is also able to aminoacylate tRNA(Sec) with serine, to form the misacylated tRNA L-seryl-tRNA(Sec), which will be further converted into selenocysteinyl-tRNA(Sec). This chain is Serine--tRNA ligase, found in Allorhizobium ampelinum (strain ATCC BAA-846 / DSM 112012 / S4) (Agrobacterium vitis (strain S4)).